Here is a 70-residue protein sequence, read N- to C-terminus: Small ribosomal subunit protein bS21 (70 aa).

This sequence belongs to the bacterial ribosomal protein bS21 family.

The chain is Small ribosomal subunit protein bS21 from Methylobacillus flagellatus (strain ATCC 51484 / DSM 6875 / VKM B-1610 / KT).